Reading from the N-terminus, the 692-residue chain is Elongation factor G (692 aa).

A tr-type G domain is found at 8 to 282 (KDYRNIGIMA…AVVDYLPSPL (275 aa)). GTP contacts are provided by residues 17–24 (AHIDAGKT), 81–85 (DTPGH), and 135–138 (NKMD).

The protein belongs to the TRAFAC class translation factor GTPase superfamily. Classic translation factor GTPase family. EF-G/EF-2 subfamily.

It localises to the cytoplasm. Functionally, catalyzes the GTP-dependent ribosomal translocation step during translation elongation. During this step, the ribosome changes from the pre-translocational (PRE) to the post-translocational (POST) state as the newly formed A-site-bound peptidyl-tRNA and P-site-bound deacylated tRNA move to the P and E sites, respectively. Catalyzes the coordinated movement of the two tRNA molecules, the mRNA and conformational changes in the ribosome. This is Elongation factor G (fusA) from Mycoplasmopsis pulmonis (strain UAB CTIP) (Mycoplasma pulmonis).